The primary structure comprises 223 residues: Thiamine-phosphate synthase (223 aa).

4-amino-2-methyl-5-(diphosphooxymethyl)pyrimidine is bound by residues Gln-42 to Lys-46 and Asn-83. Positions 84 and 103 each coordinate Mg(2+). Position 122 (Ser-122) interacts with 4-amino-2-methyl-5-(diphosphooxymethyl)pyrimidine. A 2-[(2R,5Z)-2-carboxy-4-methylthiazol-5(2H)-ylidene]ethyl phosphate-binding site is contributed by Thr-148 to Thr-150. 4-amino-2-methyl-5-(diphosphooxymethyl)pyrimidine is bound at residue Lys-151. Residue Gly-179 participates in 2-[(2R,5Z)-2-carboxy-4-methylthiazol-5(2H)-ylidene]ethyl phosphate binding.

This sequence belongs to the thiamine-phosphate synthase family. The cofactor is Mg(2+).

It carries out the reaction 2-[(2R,5Z)-2-carboxy-4-methylthiazol-5(2H)-ylidene]ethyl phosphate + 4-amino-2-methyl-5-(diphosphooxymethyl)pyrimidine + 2 H(+) = thiamine phosphate + CO2 + diphosphate. The catalysed reaction is 2-(2-carboxy-4-methylthiazol-5-yl)ethyl phosphate + 4-amino-2-methyl-5-(diphosphooxymethyl)pyrimidine + 2 H(+) = thiamine phosphate + CO2 + diphosphate. The enzyme catalyses 4-methyl-5-(2-phosphooxyethyl)-thiazole + 4-amino-2-methyl-5-(diphosphooxymethyl)pyrimidine + H(+) = thiamine phosphate + diphosphate. It participates in cofactor biosynthesis; thiamine diphosphate biosynthesis; thiamine phosphate from 4-amino-2-methyl-5-diphosphomethylpyrimidine and 4-methyl-5-(2-phosphoethyl)-thiazole: step 1/1. Condenses 4-methyl-5-(beta-hydroxyethyl)thiazole monophosphate (THZ-P) and 2-methyl-4-amino-5-hydroxymethyl pyrimidine pyrophosphate (HMP-PP) to form thiamine monophosphate (TMP). This chain is Thiamine-phosphate synthase, found in Mycolicibacterium paratuberculosis (strain ATCC BAA-968 / K-10) (Mycobacterium paratuberculosis).